Consider the following 662-residue polypeptide: 72 kDa type IV collagenase (662 aa).

The signal sequence occupies residues 1–29; that stretch reads MEALGARGALAGFLRALCVLGCLLGRATA. The propeptide at 30–109 is activation peptide; the sequence is PPSPVIKFPG…PRCGNPDVAN (80 aa). Residues 100–107 carry the Cysteine switch motif; the sequence is PRCGNPDV. Cys102 is a Zn(2+) binding site. Positions 110 to 221 are collagenase-like 1; sequence YNFFPRKPKW…LWTLGEGQVV (112 aa). The Ca(2+) site is built by Asp134 and Asp168. 2 residues coordinate Zn(2+): His178 and Asp180. Positions 185 and 186 each coordinate Ca(2+). His193 is a Zn(2+) binding site. Gly200, Gly202, and Asp204 together coordinate Ca(2+). His206 is a binding site for Zn(2+). 3 residues coordinate Ca(2+): Asp208, Asp209, and Glu211. Residues 222 to 396 are collagen-binding; that stretch reads RVKYGNADGE…WGFCPDQGYS (175 aa). Fibronectin type-II domains lie at 228–276, 286–334, and 344–392; these read ADGE…FCPH, ADGQ…FCPE, and SEGA…FCPD. Disulfide bonds link Cys233-Cys259, Cys247-Cys274, Cys291-Cys317, Cys305-Cys332, Cys349-Cys375, and Cys363-Cys390. The tract at residues 397-467 is collagenase-like 2; the sequence is LFLVAAHEFG…GPTPTLGPVT (71 aa). His403 provides a ligand contact to Zn(2+). Glu404 is an active-site residue. Zn(2+) contacts are provided by His407 and His413. A required for inhibitor TIMP2 binding region spans residues 414–662; the sequence is SQDPGALMAP…GSIKTDWLGC (249 aa). Residues Cys471 and Cys662 are joined by a disulfide bond. Hemopexin repeat units follow at residues 474-518, 519-565, 567-615, and 616-662; these read DIVF…WPEL, PEKI…GLPP, VQRV…WNAI, and PDHL…WLGC. Ca(2+)-binding residues include Asp478, Asp523, and Asp571. Asn575 carries an N-linked (GlcNAc...) asparagine glycan. A Ca(2+)-binding site is contributed by Asp620. Asn644 is a glycosylation site (N-linked (GlcNAc...) asparagine).

This sequence belongs to the peptidase M10A family. Interacts (via the C-terminal hemopexin-like domains-containing region) with the integrin alpha-V/beta-3; the interaction promotes vascular invasion in angiogenic vessels and melamoma cells. Interacts (via the C-terminal PEX domain) with TIMP2 (via the C-terminal); the interaction inhibits the degradation activity. Interacts with GSK3B. The cofactor is Ca(2+). Requires Zn(2+) as cofactor. In terms of processing, phosphorylation on multiple sites modulates enzymatic activity. Phosphorylated by PKC in vitro. Post-translationally, the propeptide is processed by MMP14 (MT-MMP1) and MMP16 (MT-MMP3). Autocatalytic cleavage in the C-terminal produces the anti-angiogenic peptide, PEX. This processing appears to be facilitated by binding integrinv/beta3.

It localises to the secreted. Its subcellular location is the extracellular space. The protein localises to the extracellular matrix. The protein resides in the membrane. It is found in the nucleus. It catalyses the reaction Cleavage of gelatin type I and collagen types IV, V, VII, X. Cleaves the collagen-like sequence Pro-Gln-Gly-|-Ile-Ala-Gly-Gln.. Ubiquitinous metalloproteinase that is involved in diverse functions such as remodeling of the vasculature, angiogenesis, tissue repair, tumor invasion, inflammation, and atherosclerotic plaque rupture. As well as degrading extracellular matrix proteins, can also act on several nonmatrix proteins such as big endothelial 1 and beta-type CGRP promoting vasoconstriction. Also cleaves KISS at a Gly-|-Leu bond. Appears to have a role in myocardial cell death pathways. Contributes to myocardial oxidative stress by regulating the activity of GSK3beta. Cleaves GSK3beta in vitro. Involved in the formation of the fibrovascular tissues. In terms of biological role, PEX, the C-terminal non-catalytic fragment of MMP2, possesses anti-angiogenic and anti-tumor properties and inhibits cell migration and cell adhesion to FGF2 and vitronectin. Ligand for integrin alpha-v/beta-3 on the surface of blood vessels. This is 72 kDa type IV collagenase (MMP2) from Oryctolagus cuniculus (Rabbit).